The following is a 691-amino-acid chain: Elongation factor G (691 aa).

The 275-residue stretch at 8-282 (EKTRNIGIMA…AVVDYLPSPV (275 aa)) folds into the tr-type G domain. Residues 17-24 (AHIDAGKT), 81-85 (DTPGH), and 135-138 (NKMD) each bind GTP.

It belongs to the TRAFAC class translation factor GTPase superfamily. Classic translation factor GTPase family. EF-G/EF-2 subfamily.

Its subcellular location is the cytoplasm. Functionally, catalyzes the GTP-dependent ribosomal translocation step during translation elongation. During this step, the ribosome changes from the pre-translocational (PRE) to the post-translocational (POST) state as the newly formed A-site-bound peptidyl-tRNA and P-site-bound deacylated tRNA move to the P and E sites, respectively. Catalyzes the coordinated movement of the two tRNA molecules, the mRNA and conformational changes in the ribosome. This is Elongation factor G from Caldicellulosiruptor saccharolyticus (strain ATCC 43494 / DSM 8903 / Tp8T 6331).